The primary structure comprises 430 residues: Tol-Pal system protein TolB (430 aa).

The first 26 residues, 1 to 26 (MSLMTKLGLRTLVASCLIAVGGAAHA), serve as a signal peptide directing secretion.

This sequence belongs to the TolB family. In terms of assembly, the Tol-Pal system is composed of five core proteins: the inner membrane proteins TolA, TolQ and TolR, the periplasmic protein TolB and the outer membrane protein Pal. They form a network linking the inner and outer membranes and the peptidoglycan layer.

Its subcellular location is the periplasm. Functionally, part of the Tol-Pal system, which plays a role in outer membrane invagination during cell division and is important for maintaining outer membrane integrity. The polypeptide is Tol-Pal system protein TolB (Paraburkholderia phytofirmans (strain DSM 17436 / LMG 22146 / PsJN) (Burkholderia phytofirmans)).